The sequence spans 277 residues: NADPH-dependent 7-cyano-7-deazaguanine reductase (277 aa).

Position 83-85 (83-85) interacts with substrate; it reads IES. 85–86 contributes to the NADPH binding site; sequence SK. Cys-184 acts as the Thioimide intermediate in catalysis. Residue Asp-191 is the Proton donor of the active site. 223–224 contributes to the substrate binding site; sequence HE. Position 252 to 253 (252 to 253) interacts with NADPH; it reads RG.

It belongs to the GTP cyclohydrolase I family. QueF type 2 subfamily. As to quaternary structure, homodimer.

The protein resides in the cytoplasm. It carries out the reaction 7-aminomethyl-7-carbaguanine + 2 NADP(+) = 7-cyano-7-deazaguanine + 2 NADPH + 3 H(+). The protein operates within tRNA modification; tRNA-queuosine biosynthesis. Catalyzes the NADPH-dependent reduction of 7-cyano-7-deazaguanine (preQ0) to 7-aminomethyl-7-deazaguanine (preQ1). In Cupriavidus necator (strain ATCC 17699 / DSM 428 / KCTC 22496 / NCIMB 10442 / H16 / Stanier 337) (Ralstonia eutropha), this protein is NADPH-dependent 7-cyano-7-deazaguanine reductase.